Consider the following 374-residue polypeptide: Carbamoyl phosphate synthase small chain (374 aa).

Residues 1 to 185 form a CPSase region; the sequence is MKAILALEDG…DVSSGYKWSD (185 aa). Residues Ser-45, Gly-237, and Gly-239 each contribute to the L-glutamine site. A Glutamine amidotransferase type-1 domain is found at 189 to 374; sequence RLVLVDYGVK…RNLVKDATGK (186 aa). The active-site Nucleophile is the Cys-264. Residues Leu-265, Gln-268, Asn-306, Gly-308, and Phe-309 each contribute to the L-glutamine site. Active-site residues include His-347 and Glu-349.

It belongs to the CarA family. Composed of two chains; the small (or glutamine) chain promotes the hydrolysis of glutamine to ammonia, which is used by the large (or ammonia) chain to synthesize carbamoyl phosphate. Tetramer of heterodimers (alpha,beta)4.

It carries out the reaction hydrogencarbonate + L-glutamine + 2 ATP + H2O = carbamoyl phosphate + L-glutamate + 2 ADP + phosphate + 2 H(+). The catalysed reaction is L-glutamine + H2O = L-glutamate + NH4(+). The protein operates within amino-acid biosynthesis; L-arginine biosynthesis; carbamoyl phosphate from bicarbonate: step 1/1. Its pathway is pyrimidine metabolism; UMP biosynthesis via de novo pathway; (S)-dihydroorotate from bicarbonate: step 1/3. Its function is as follows. Small subunit of the glutamine-dependent carbamoyl phosphate synthetase (CPSase). CPSase catalyzes the formation of carbamoyl phosphate from the ammonia moiety of glutamine, carbonate, and phosphate donated by ATP, constituting the first step of 2 biosynthetic pathways, one leading to arginine and/or urea and the other to pyrimidine nucleotides. The small subunit (glutamine amidotransferase) binds and cleaves glutamine to supply the large subunit with the substrate ammonia. This chain is Carbamoyl phosphate synthase small chain, found in Maridesulfovibrio salexigens (strain ATCC 14822 / DSM 2638 / NCIMB 8403 / VKM B-1763) (Desulfovibrio salexigens).